The following is a 347-amino-acid chain: GMP reductase (347 aa).

Residue 108–131 (ADFVKMQQILALSPGLKFICIDVA) participates in NADP(+) binding. K(+)-binding residues include Gly-181 and Gly-183. The active-site Thioimidate intermediate is the Cys-186. Position 216–239 (216–239 (IVSDGGCSVPGDVAKAFGGGADFV)) interacts with NADP(+).

The protein belongs to the IMPDH/GMPR family. GuaC type 1 subfamily. Homotetramer.

It carries out the reaction IMP + NH4(+) + NADP(+) = GMP + NADPH + 2 H(+). Functionally, catalyzes the irreversible NADPH-dependent deamination of GMP to IMP. It functions in the conversion of nucleobase, nucleoside and nucleotide derivatives of G to A nucleotides, and in maintaining the intracellular balance of A and G nucleotides. In Serratia proteamaculans (strain 568), this protein is GMP reductase.